The sequence spans 89 residues: MAKKSWIARDKKKAETVKRYAELRAQLKAEKDYIGLTMLPRNASPTRTVNRCLVSGRRRAFIRRFKLSRISFRELANAGMIPGVTKSSW.

The protein belongs to the universal ribosomal protein uS14 family. In terms of assembly, part of the 30S ribosomal subunit. Contacts proteins S3 and S10.

Functionally, binds 16S rRNA, required for the assembly of 30S particles and may also be responsible for determining the conformation of the 16S rRNA at the A site. This is Small ribosomal subunit protein uS14 from Akkermansia muciniphila (strain ATCC BAA-835 / DSM 22959 / JCM 33894 / BCRC 81048 / CCUG 64013 / CIP 107961 / Muc).